The chain runs to 70 residues: DNA-directed RNA polymerase subunit omega (70 aa).

The protein belongs to the RNA polymerase subunit omega family. The RNAP catalytic core consists of 2 alpha, 1 beta, 1 beta' and 1 omega subunit. When a sigma factor is associated with the core the holoenzyme is formed, which can initiate transcription.

The enzyme catalyses RNA(n) + a ribonucleoside 5'-triphosphate = RNA(n+1) + diphosphate. Promotes RNA polymerase assembly. Latches the N- and C-terminal regions of the beta' subunit thereby facilitating its interaction with the beta and alpha subunits. This is DNA-directed RNA polymerase subunit omega from Bacillus cereus (strain B4264).